The chain runs to 381 residues: Arginine biosynthesis bifunctional protein ArgJ (381 aa).

6 residues coordinate substrate: Thr143, Lys165, Thr176, Glu255, Asn376, and Thr381. Thr176 acts as the Nucleophile in catalysis.

The protein belongs to the ArgJ family. In terms of assembly, heterotetramer of two alpha and two beta chains.

Its subcellular location is the cytoplasm. The enzyme catalyses N(2)-acetyl-L-ornithine + L-glutamate = N-acetyl-L-glutamate + L-ornithine. The catalysed reaction is L-glutamate + acetyl-CoA = N-acetyl-L-glutamate + CoA + H(+). It functions in the pathway amino-acid biosynthesis; L-arginine biosynthesis; L-ornithine and N-acetyl-L-glutamate from L-glutamate and N(2)-acetyl-L-ornithine (cyclic): step 1/1. Its pathway is amino-acid biosynthesis; L-arginine biosynthesis; N(2)-acetyl-L-ornithine from L-glutamate: step 1/4. Functionally, catalyzes two activities which are involved in the cyclic version of arginine biosynthesis: the synthesis of N-acetylglutamate from glutamate and acetyl-CoA as the acetyl donor, and of ornithine by transacetylation between N(2)-acetylornithine and glutamate. This chain is Arginine biosynthesis bifunctional protein ArgJ, found in Thermus thermophilus (strain ATCC BAA-163 / DSM 7039 / HB27).